Reading from the N-terminus, the 282-residue chain is Succinate dehydrogenase [ubiquinone] iron-sulfur subunit, mitochondrial (282 aa).

The transit peptide at 1–30 (MAATVGVSLKRGFPAAVLGRVGLQFQACRG) directs the protein to the mitochondrion. In terms of domain architecture, 2Fe-2S ferredoxin-type spans 42-135 (KKFAIYRWDP…VSKIYPLPHM (94 aa)). 2 positions are modified to N6-acetyllysine: K53 and K57. Positions 95, 100, 103, and 115 each coordinate [2Fe-2S] cluster. Residues 148–220 (FYAQYKSIEP…PAVLMQAYRW (73 aa)) form an interaction with SDHAF1 region. In terms of domain architecture, 4Fe-4S ferredoxin-type spans 178–208 (DREKLDGLYECILCACCSTSCPSYWWNGDKY). C188, C191, and C194 together coordinate [4Fe-4S] cluster. C198 is a binding site for [3Fe-4S] cluster. Residue W203 participates in a ubiquinone binding. C245 and C251 together coordinate [3Fe-4S] cluster. Position 255 (C255) interacts with [4Fe-4S] cluster.

This sequence belongs to the succinate dehydrogenase/fumarate reductase iron-sulfur protein family. As to quaternary structure, component of complex II composed of four subunits: the flavoprotein (FP) SDHA, iron-sulfur protein (IP) SDHB, and a cytochrome b560 composed of SDHC and SDHD. Interacts with SDHAF1; the interaction is required for iron-sulfur cluster incorporation into SDHB. Requires [2Fe-2S] cluster as cofactor. [3Fe-4S] cluster serves as cofactor. [4Fe-4S] cluster is required as a cofactor.

It localises to the mitochondrion inner membrane. It carries out the reaction a quinone + succinate = fumarate + a quinol. The enzyme catalyses (R)-malate + a quinone = enol-oxaloacetate + a quinol. It catalyses the reaction (S)-malate + a quinone = enol-oxaloacetate + a quinol. It functions in the pathway carbohydrate metabolism; tricarboxylic acid cycle; fumarate from succinate (eukaryal route): step 1/1. With respect to regulation, enol-oxaloacetate inhibits the succinate dehydrogenase activity. Its function is as follows. Iron-sulfur protein (IP) subunit of the succinate dehydrogenase complex (mitochondrial respiratory chain complex II), responsible for transferring electrons from succinate to ubiquinone (coenzyme Q). SDH also oxidizes malate to the non-canonical enol form of oxaloacetate, enol-oxaloacetate. Enol-oxaloacetate, which is a potent inhibitor of the succinate dehydrogenase activity, is further isomerized into keto-oxaloacetate. This Mus musculus (Mouse) protein is Succinate dehydrogenase [ubiquinone] iron-sulfur subunit, mitochondrial (Sdhb).